A 396-amino-acid polypeptide reads, in one-letter code: S-adenosylmethionine synthase (396 aa).

Glu11 contributes to the Mg(2+) binding site. Residue His17 participates in ATP binding. K(+) is bound at residue Glu45. L-methionine-binding residues include Glu58 and Gln101. ATP is bound by residues 169-171 (DGK), 237-240 (SGRF), Asp248, 254-255 (RK), Ala271, Lys275, and Lys279. Asp248 serves as a coordination point for L-methionine. An L-methionine-binding site is contributed by Lys279.

The protein belongs to the AdoMet synthase family. In terms of assembly, homotetramer. Mn(2+) serves as cofactor. The cofactor is Mg(2+). Co(2+) is required as a cofactor. Requires K(+) as cofactor.

Its subcellular location is the cytoplasm. It catalyses the reaction L-methionine + ATP + H2O = S-adenosyl-L-methionine + phosphate + diphosphate. Its pathway is amino-acid biosynthesis; S-adenosyl-L-methionine biosynthesis; S-adenosyl-L-methionine from L-methionine: step 1/1. Its function is as follows. Catalyzes the formation of S-adenosylmethionine from methionine and ATP. The reaction comprises two steps that are both catalyzed by the same enzyme: formation of S-adenosylmethionine (AdoMet) and triphosphate, and subsequent hydrolysis of the triphosphate. The sequence is that of S-adenosylmethionine synthase (SAMS) from Medicago sativa subsp. falcata (Sickle medic).